The sequence spans 162 residues: Shikimate kinase (162 aa).

Glycine 10 to threonine 15 is a binding site for ATP. Serine 14 provides a ligand contact to Mg(2+). Positions 28, 52, and 73 each coordinate substrate. Arginine 113 contacts ATP. A substrate-binding site is contributed by arginine 129.

It belongs to the shikimate kinase family. As to quaternary structure, monomer. Mg(2+) serves as cofactor.

The protein resides in the cytoplasm. It catalyses the reaction shikimate + ATP = 3-phosphoshikimate + ADP + H(+). It functions in the pathway metabolic intermediate biosynthesis; chorismate biosynthesis; chorismate from D-erythrose 4-phosphate and phosphoenolpyruvate: step 5/7. Catalyzes the specific phosphorylation of the 3-hydroxyl group of shikimic acid using ATP as a cosubstrate. The protein is Shikimate kinase of Lactococcus lactis subsp. cremoris (strain MG1363).